We begin with the raw amino-acid sequence, 118 residues long: MTDTAEAVPNFEEMFASRFTENDKEYQEYLKRPPESPPIVEEWNSRAGGNQRNRGNRLQDNRQFRGRDNRWGWPSDNRSNQWHGRSWGNNYPQHRQEPYYPQQYGHYGYNQRPPYGYY.

Position 2 is an N-acetylthreonine (T2). The segment at 2–55 is interaction with RNMT; that stretch reads TDTAEAVPNFEEMFASRFTENDKEYQEYLKRPPESPPIVEEWNSRAGGNQRNRG. The tract at residues 30 to 118 is disordered; that stretch reads LKRPPESPPI…YNQRPPYGYY (89 aa). A Phosphoserine modification is found at S36. The short motif at 36–42 is the RNMT-activating domain element; that stretch reads SPPIVEE. Positions 45–56 are enriched in low complexity; that stretch reads SRAGGNQRNRGN. The RNA-binding stretch occupies residues 56 to 118; the sequence is NRLQDNRQFR…YNQRPPYGYY (63 aa). The span at 57–70 shows a compositional bias: basic and acidic residues; the sequence is RLQDNRQFRGRDNR. Positions 76 to 93 are enriched in polar residues; sequence DNRSNQWHGRSWGNNYPQ. An Omega-N-methylarginine modification is found at R85. S86 bears the Phosphoserine mark. Residues 98–109 are compositionally biased toward low complexity; the sequence is PYYPQQYGHYGY.

The protein belongs to the RAM family. Interacts with RNMT; this interaction enhances mRNA binding and cap methyltransferase activity.

It localises to the nucleus. Its function is as follows. Regulatory subunit of the mRNA-capping methyltransferase RNMT:RAMAC complex that methylates the N7 position of the added guanosine to the 5'-cap structure of mRNAs. Promotes the recruitment of the methyl donor, S-adenosyl-L-methionine, to RNMT. Regulates RNMT expression by a post-transcriptional stabilizing mechanism. Binds RNA. This is RNA guanine-N7 methyltransferase activating subunit (RAMAC) from Pongo abelii (Sumatran orangutan).